The following is a 368-amino-acid chain: NAD(P)H-quinone oxidoreductase subunit 1, chloroplastic (368 aa).

9 helical membrane passes run 27–47, 97–117, 130–150, 166–186, 204–224, 249–269, 270–290, 305–325, and 348–368; these read FLWIIFSILILMLGVTIGVLV, WLFNIGPILVLIPVFLSYLVI, IGVFFWIAVSSVVPLGLLMAG, AAQSISYEIPLALSVLSIALL, FLSWNLWRQPIGFIVFFIASL, YSGMKFAFFYLASYLNLLVSS, LFVTILYLGGWHFSIPFFSLF, VISIIIGIVITLVKSYLFLFI, and FLLPIALGNLLLTTSFQLFLL.

Belongs to the complex I subunit 1 family. As to quaternary structure, NDH is composed of at least 16 different subunits, 5 of which are encoded in the nucleus.

It localises to the plastid. The protein localises to the chloroplast thylakoid membrane. It catalyses the reaction a plastoquinone + NADH + (n+1) H(+)(in) = a plastoquinol + NAD(+) + n H(+)(out). It carries out the reaction a plastoquinone + NADPH + (n+1) H(+)(in) = a plastoquinol + NADP(+) + n H(+)(out). Functionally, NDH shuttles electrons from NAD(P)H:plastoquinone, via FMN and iron-sulfur (Fe-S) centers, to quinones in the photosynthetic chain and possibly in a chloroplast respiratory chain. The immediate electron acceptor for the enzyme in this species is believed to be plastoquinone. Couples the redox reaction to proton translocation, and thus conserves the redox energy in a proton gradient. This is NAD(P)H-quinone oxidoreductase subunit 1, chloroplastic from Marchantia polymorpha (Common liverwort).